The sequence spans 353 residues: UPF0283 membrane protein YpsIP31758_1791 (353 aa).

3 consecutive transmembrane segments (helical) span residues 71–91 (MVTAGMVILGASVIAQSVQWV), 101–121 (IALGATTAGGLIILAGVGSVV), and 214–234 (ESALMIAVSPLALVDMAFIAW).

Belongs to the UPF0283 family.

Its subcellular location is the cell inner membrane. The polypeptide is UPF0283 membrane protein YpsIP31758_1791 (Yersinia pseudotuberculosis serotype O:1b (strain IP 31758)).